The following is a 359-amino-acid chain: Trans-enoyl reductase FSL5 (359 aa).

An NADP(+)-binding site is contributed by 47–50; sequence IDGK. A substrate-binding site is contributed by 134–141; the sequence is SGVGTIGL. Residues 169–172, 192–195, tyrosine 210, and 257–258 each bind NADP(+); these read STAT, SPHN, and LE. 277–281 lines the substrate pocket; it reads GPTLL. Residue 346–347 participates in NADP(+) binding; the sequence is VS.

This sequence belongs to the zinc-containing alcohol dehydrogenase family. In terms of assembly, monomer.

The protein operates within secondary metabolite biosynthesis. Its function is as follows. Trans-enoyl reductase; part of the gene cluster that mediates the biosynthesis of fusarielins F, G and H, decaketide compounds with 5 methylations and a decaline core that act as mycoestrogens as they stimulate growth of MCF-7 breast cancer cells. The initial compound in the pathway is produced by the reducing polyketide synthase FSL1. FSL1 lacks an active enoyl reductase (ER) domain and biosynthesis of fusarielins relies on the trans-acting enoyl reductase FSL5, before it is released through hydrolysis catalyzed by the thioesterase FSL2. Fusarielins F, G, and H have a C11=C12 cis double bond and is fully reduced between C10 and C11 and between C12 and C13. FSL3 can be involved in the formation of the C11=C12 cis double bond by moving a hypothetical C10=C11 or C12=C13 trans double bond to form prefusarielin. Prefusarielin is oxygenated at C15 and C16 by the cytochrome P450 monooxygenase FSL4, resulting in fusarielin F, which subsequently is epoxidized into fusarielin G by the same enzyme. The final step in the pathway is a reduction of the carboxylic acid moiety to yield fusarielin H via a still undetermined mechanism. This is Trans-enoyl reductase FSL5 from Gibberella zeae (strain ATCC MYA-4620 / CBS 123657 / FGSC 9075 / NRRL 31084 / PH-1) (Wheat head blight fungus).